Here is a 338-residue protein sequence, read N- to C-terminus: Methionine import ATP-binding protein MetN 1 (338 aa).

The ABC transporter domain maps to 2 to 241 (IEVRSVTKRF…PHSELGVGLL (240 aa)). 38–45 (GQSGAGKT) serves as a coordination point for ATP.

It belongs to the ABC transporter superfamily. Methionine importer (TC 3.A.1.24) family. As to quaternary structure, the complex is composed of two ATP-binding proteins (MetN), two transmembrane proteins (MetI) and a solute-binding protein (MetQ).

The protein localises to the cell membrane. It catalyses the reaction L-methionine(out) + ATP + H2O = L-methionine(in) + ADP + phosphate + H(+). The enzyme catalyses D-methionine(out) + ATP + H2O = D-methionine(in) + ADP + phosphate + H(+). Part of the ABC transporter complex MetNIQ involved in methionine import. Responsible for energy coupling to the transport system. This Rhodococcus jostii (strain RHA1) protein is Methionine import ATP-binding protein MetN 1.